A 199-amino-acid chain; its full sequence is Small ribosomal subunit protein uS2 (199 aa).

This sequence belongs to the universal ribosomal protein uS2 family.

In Thermoplasma acidophilum (strain ATCC 25905 / DSM 1728 / JCM 9062 / NBRC 15155 / AMRC-C165), this protein is Small ribosomal subunit protein uS2 (rps2).